The following is a 330-amino-acid chain: Low-redox potential peroxidase (330 aa).

Positions 1 to 24 (MRSSTHIFVSFVVYCGVFVTSAIA) are cleaved as a signal peptide. N27 carries an N-linked (GlcNAc...) asparagine glycan. 3 disulfide bridges follow: C34-C285, C54-C123, and C251-C314. Ca(2+) contacts are provided by G69, D71, and S73. Heme b is bound at residue H178. The Ca(2+) site is built by S179, D196, T198, and D203.

Belongs to the peroxidase family. Ligninase subfamily. Requires Ca(2+) as cofactor. It depends on heme b as a cofactor.

The protein localises to the secreted. The catalysed reaction is 2 a phenolic donor + H2O2 = 2 a phenolic radical donor + 2 H2O. Can oxidize the lignin redox mediator veratryl alcohol to veratryl aldehyde. May be involved in oxidation of lignocellulose substrates. In Taiwanofungus camphoratus (Poroid brown-rot fungus), this protein is Low-redox potential peroxidase (LnP).